A 181-amino-acid chain; its full sequence is Neuroblastoma suppressor of tumorigenicity 1 (181 aa).

A signal peptide spans 1–16 (MMLRVLVGAVLPAMLL). Disulfide bonds link Cys-35–Cys-85, Cys-49–Cys-99, Cys-59–Cys-118, Cys-63–Cys-120, and Cys-82–Cys-123. A CTCK domain is found at 35 to 124 (CEAKNITQIV…ILHCSCQACG (90 aa)). Residues 132–181 (LSVYVQGEDGPGSQPGTHPHPHPHPHPGGQTPEPEDPPGAPHTEEEGAED) are disordered.

It belongs to the DAN family. Homodimer. In terms of tissue distribution, most abundant in normal lung and meningioma.

It is found in the secreted. Possible candidate as a tumor suppressor gene of neuroblastoma. May play an important role in preventing cells from entering the final stage (G1/S) of the transformation process. This chain is Neuroblastoma suppressor of tumorigenicity 1 (NBL1), found in Homo sapiens (Human).